The primary structure comprises 112 residues: Ribonuclease P protein component (112 aa).

It belongs to the RnpA family. As to quaternary structure, consists of a catalytic RNA component (M1 or rnpB) and a protein subunit.

The enzyme catalyses Endonucleolytic cleavage of RNA, removing 5'-extranucleotides from tRNA precursor.. In terms of biological role, RNaseP catalyzes the removal of the 5'-leader sequence from pre-tRNA to produce the mature 5'-terminus. It can also cleave other RNA substrates such as 4.5S RNA. The protein component plays an auxiliary but essential role in vivo by binding to the 5'-leader sequence and broadening the substrate specificity of the ribozyme. The chain is Ribonuclease P protein component from Mesomycoplasma hyopneumoniae (strain 7448) (Mycoplasma hyopneumoniae).